A 153-amino-acid chain; its full sequence is Ribosome maturation factor RimP (153 aa).

Belongs to the RimP family.

The protein localises to the cytoplasm. In terms of biological role, required for maturation of 30S ribosomal subunits. This chain is Ribosome maturation factor RimP, found in Solibacter usitatus (strain Ellin6076).